The primary structure comprises 405 residues: Sesquiterpene synthase 16 (405 aa).

3 residues coordinate Mg(2+): D155, D159, and E309. The DDXXD motif signature appears at 155-159 (DDTYD).

This sequence belongs to the terpene synthase family. Tpsa subfamily. Mg(2+) serves as cofactor. Requires Mn(2+) as cofactor.

The protein operates within secondary metabolite biosynthesis; terpenoid biosynthesis. In terms of biological role, sesquiterpene synthase involved in the biosynthesis of volatile compounds. No activity detected with geranyl diphosphate (GPP) and farnesyl diphosphate (FPP) as substrates. This chain is Sesquiterpene synthase 16, found in Solanum habrochaites (Wild tomato).